The following is a 115-amino-acid chain: U3-lycotoxin-Ls1j (115 aa).

The signal sequence occupies residues 1-20 (MKFVLLFGVFLVTLFSYSSA). Positions 21 to 44 (EMLDDFDQADEDELLSLIEKEEAR) are excised as a propeptide. Intrachain disulfides connect Cys48–Cys63, Cys55–Cys72, Cys62–Cys87, and Cys74–Cys85.

Belongs to the neurotoxin 19 (CSTX) family. 01 subfamily. In terms of tissue distribution, expressed by the venom gland.

The protein localises to the secreted. The polypeptide is U3-lycotoxin-Ls1j (Lycosa singoriensis (Wolf spider)).